We begin with the raw amino-acid sequence, 441 residues long: Chitinase-like protein Idgf3 (441 aa).

A signal peptide spans 1–23; the sequence is MTGSLWLSLALSLAVLAQFKVSA. The region spanning 25–441 is the GH18 domain; the sequence is PNLVCFYDSQ…MLRAIKYRLL (417 aa). Cys-29 and Cys-56 are joined by a disulfide. Asn-221 carries an N-linked (GlcNAc...) asparagine glycan. The tract at residues 309 to 331 is disordered; that stretch reads SGDSGMPVVPSTQGPAPAGPQSK. Cys-342 and Cys-425 are disulfide-bonded.

It belongs to the glycosyl hydrolase 18 family. IDGF subfamily. Post-translationally, glycosylated.

The protein resides in the secreted. Its function is as follows. Cooperates with insulin-like peptides to stimulate the proliferation, polarization and motility of imaginal disk cells. May act by stabilizing the binding of insulin-like peptides to its receptor through a simultaneous interaction with both molecules to form a multiprotein signaling complex. This is Chitinase-like protein Idgf3 (Idgf3) from Drosophila yakuba (Fruit fly).